We begin with the raw amino-acid sequence, 718 residues long: Exostosin-2 (718 aa).

At methionine 1–tyrosine 25 the chain is on the cytoplasmic side. The chain crosses the membrane as a helical; Signal-anchor for type II membrane protein span at residues tyrosine 26 to tryptophan 46. The Lumenal portion of the chain corresponds to proline 47–leucine 718. Cystine bridges form between cysteine 85/cysteine 90, cysteine 96/cysteine 151, cysteine 286/cysteine 300, and cysteine 318/cysteine 339. Asparagine 288 carries N-linked (GlcNAc...) asparagine glycosylation. UDP contacts are provided by leucine 461, arginine 465, asparagine 490, and asparagine 517. Positions 465, 490, 517, 522, 538, 539, and 540 each coordinate UDP-N-acetyl-alpha-D-glucosamine. UDP is bound by residues aspartate 538 and aspartate 539. Aspartate 540 contacts Mn(2+). A protein contacts are provided by tyrosine 582 and serine 584. A disulfide bond links cysteine 626 and cysteine 676. Residues glutamate 627 and aspartate 628 each contribute to the UDP-N-acetyl-alpha-D-glucosamine site. The N-linked (GlcNAc...) asparagine glycan is linked to asparagine 637. The a protein site is built by lysine 651 and lysine 653. Arginine 673 serves as a coordination point for UDP-N-acetyl-alpha-D-glucosamine.

This sequence belongs to the glycosyltransferase 47 family. Part of the heparan sulfate polymerase, a dimeric complex composed of EXT1 and EXT2. Could also form homooligomeric complexes. Interacts with NDST1. Interacts with GALNT5. Requires Mn(2+) as cofactor. N-glycosylated at Asn-637. In terms of processing, a soluble form is generated by proteolytic processing. Expressed in heart, brain, spleen, lung, liver, skeletal muscle and testis. Heart shows a high expression.

Its subcellular location is the golgi apparatus membrane. It is found in the golgi apparatus. The protein localises to the cis-Golgi network membrane. The protein resides in the endoplasmic reticulum membrane. It localises to the secreted. It catalyses the reaction 3-O-{[(1-&gt;4)-beta-D-GlcA-(1-&gt;4)-alpha-D-GlcNAc](n)-(1-&gt;4)-beta-D-GlcA-(1-&gt;3)-beta-D-Gal-(1-&gt;3)-beta-D-Gal-(1-&gt;4)-beta-D-Xyl}-L-seryl-[protein] + UDP-N-acetyl-alpha-D-glucosamine = 3-O-{alpha-D-GlcNAc-[(1-&gt;4)-beta-D-GlcA-(1-&gt;4)-alpha-D-GlcNAc](n)-(1-&gt;4)-beta-D-GlcA-(1-&gt;3)-beta-D-Gal-(1-&gt;3)-beta-D-Gal-(1-&gt;4)-beta-D-Xyl}-L-seryl-[protein] + UDP + H(+). The protein operates within protein modification; protein glycosylation. Glycosyltransferase forming with EXT1 the heterodimeric heparan sulfate polymerase which catalyzes the elongation of the heparan sulfate glycan backbone. Glycan backbone extension consists in the alternating transfer of (1-&gt;4)-beta-D-GlcA and (1-&gt;4)-alpha-D-GlcNAc residues from their respective UDP-sugar donors. Both EXT1 and EXT2 are required for the full activity of the polymerase since EXT1 bears the N-acetylglucosaminyl-proteoglycan 4-beta-glucuronosyltransferase activity within the complex while EXT2 carries the glucuronosyl-N-acetylglucosaminyl-proteoglycan 4-alpha-N-acetylglucosaminyltransferase activity. Heparan sulfate proteoglycans are ubiquitous components of the extracellular matrix and play an important role in tissue homeostasis and signaling. The chain is Exostosin-2 from Mus musculus (Mouse).